The primary structure comprises 1405 residues: DNA-directed RNA polymerase subunit beta' (1405 aa).

The Zn(2+) site is built by C70, C72, C85, and C88. 3 residues coordinate Mg(2+): D460, D462, and D464. 4 residues coordinate Zn(2+): C814, C888, C895, and C898.

It belongs to the RNA polymerase beta' chain family. The RNAP catalytic core consists of 2 alpha, 1 beta, 1 beta' and 1 omega subunit. When a sigma factor is associated with the core the holoenzyme is formed, which can initiate transcription. It depends on Mg(2+) as a cofactor. Requires Zn(2+) as cofactor.

It carries out the reaction RNA(n) + a ribonucleoside 5'-triphosphate = RNA(n+1) + diphosphate. DNA-dependent RNA polymerase catalyzes the transcription of DNA into RNA using the four ribonucleoside triphosphates as substrates. The chain is DNA-directed RNA polymerase subunit beta' from Shewanella sp. (strain ANA-3).